A 70-amino-acid polypeptide reads, in one-letter code: Small ribosomal subunit protein bS21 (70 aa).

Belongs to the bacterial ribosomal protein bS21 family.

The sequence is that of Small ribosomal subunit protein bS21 from Albidiferax ferrireducens (strain ATCC BAA-621 / DSM 15236 / T118) (Rhodoferax ferrireducens).